Reading from the N-terminus, the 544-residue chain is MSTKFIFVTGGVVSSLGKGIAAASLAAILEARGLNVTILKLDPYINVDPGTMSPIQHGEVYVTEDGAETDLDLGHYERFIRTKMTSRNNFTQGRVYKDVLHRERRGEYLGATIQVIPHITNDIKQRVYSGAEGYDIALVEIGGTVGDIESQPFLEAIRQMGTEIGRERALFIHLTLVPFLGPAGEVKTKPTQHSVKELRSIGIQPDILICRSDRKLPSNERAKIALFTNVEEKAVISLPDVDSIYKIPALLKSQDLDYFVCRRFHLDVPEADLVEWEQVLYQESNPTGEVTIGMVGKYIELPDAYKSVNEALKHAGLKNRLTVNIQYIDSQDLETKGVDSLAHLDAILVPGGFGGRGVEGKILAAKYARENKVPYLGICLGMQVALIEYARNVAGLVDANSTEFNAQSASPVVGLITEWLDAEGKVEQRDEKSDLGGTMRLGAQKCHLTPGSKVHAVYGSDEIVERHRHRYEVNNNFVEQLEKAGLSFTGLSEDKKLVEIIENKDHPWFIAAQFHPEFTSTPRDGHPLFEGFVAAAHIHQKASS.

The segment at 1–266 is amidoligase domain; sequence MSTKFIFVTG…DYFVCRRFHL (266 aa). Serine 14 contributes to the CTP binding site. Serine 14 is a binding site for UTP. Residues 15-20 and aspartate 72 contribute to the ATP site; that span reads SLGKGI. Mg(2+)-binding residues include aspartate 72 and glutamate 140. CTP contacts are provided by residues 147–149, 187–192, and lysine 223; these read DIE and KTKPTQ. UTP is bound by residues 187–192 and lysine 223; that span reads KTKPTQ. The 252-residue stretch at 291 to 542 folds into the Glutamine amidotransferase type-1 domain; sequence TIGMVGKYIE…VAAAHIHQKA (252 aa). Glycine 352 is a binding site for L-glutamine. Catalysis depends on cysteine 379, which acts as the Nucleophile; for glutamine hydrolysis. Residues 380–383, glutamate 403, and arginine 470 each bind L-glutamine; that span reads LGMQ. Residues histidine 515 and glutamate 517 contribute to the active site.

The protein belongs to the CTP synthase family. As to quaternary structure, homotetramer.

It carries out the reaction UTP + L-glutamine + ATP + H2O = CTP + L-glutamate + ADP + phosphate + 2 H(+). It catalyses the reaction L-glutamine + H2O = L-glutamate + NH4(+). The enzyme catalyses UTP + NH4(+) + ATP = CTP + ADP + phosphate + 2 H(+). Its pathway is pyrimidine metabolism; CTP biosynthesis via de novo pathway; CTP from UDP: step 2/2. Its activity is regulated as follows. Allosterically activated by GTP, when glutamine is the substrate; GTP has no effect on the reaction when ammonia is the substrate. The allosteric effector GTP functions by stabilizing the protein conformation that binds the tetrahedral intermediate(s) formed during glutamine hydrolysis. Inhibited by the product CTP, via allosteric rather than competitive inhibition. In terms of biological role, catalyzes the ATP-dependent amination of UTP to CTP with either L-glutamine or ammonia as the source of nitrogen. Regulates intracellular CTP levels through interactions with the four ribonucleotide triphosphates. The sequence is that of CTP synthase from Pseudoalteromonas translucida (strain TAC 125).